The following is a 294-amino-acid chain: GDP-6-deoxy-D-talose 4-dehydrogenase (294 aa).

NAD(+)-binding positions include 11-12 (FI), 38-39 (DL), 60-64 (LAALT), T104, Y128, K132, and F154. 2 residues coordinate substrate: T104 and Y128. Residue Y128 is the Proton acceptor of the active site. 2 residues coordinate substrate: N155 and R190.

This sequence belongs to the NAD(P)-dependent epimerase/dehydratase family.

The catalysed reaction is GDP-6-deoxy-alpha-D-talose + NAD(+) = GDP-4-dehydro-alpha-D-rhamnose + NADH + H(+). The enzyme catalyses GDP-6-deoxy-alpha-D-talose + NADP(+) = GDP-4-dehydro-alpha-D-rhamnose + NADPH + H(+). It participates in bacterial outer membrane biogenesis; LPS O-antigen biosynthesis. In terms of biological role, catalyzes the conversion of GDP-4-dehydro-6-deoxy-D-mannose to GDP-6-deoxy-D-talose. This Aggregatibacter actinomycetemcomitans (Actinobacillus actinomycetemcomitans) protein is GDP-6-deoxy-D-talose 4-dehydrogenase (tld).